Here is a 217-residue protein sequence, read N- to C-terminus: Protein-L-isoaspartate O-methyltransferase (217 aa).

The active site involves Ser-62.

This sequence belongs to the methyltransferase superfamily. L-isoaspartyl/D-aspartyl protein methyltransferase family.

It localises to the cytoplasm. It catalyses the reaction [protein]-L-isoaspartate + S-adenosyl-L-methionine = [protein]-L-isoaspartate alpha-methyl ester + S-adenosyl-L-homocysteine. Catalyzes the methyl esterification of L-isoaspartyl residues in peptides and proteins that result from spontaneous decomposition of normal L-aspartyl and L-asparaginyl residues. It plays a role in the repair and/or degradation of damaged proteins. The chain is Protein-L-isoaspartate O-methyltransferase from Trichlorobacter lovleyi (strain ATCC BAA-1151 / DSM 17278 / SZ) (Geobacter lovleyi).